We begin with the raw amino-acid sequence, 887 residues long: Probable LRR receptor-like serine/threonine-protein kinase At5g59680 (887 aa).

The N-terminal stretch at 1-23 (MERSLELLLLLIRTLAIIHISQA) is a signal peptide. Residues 25–510 (SQQGFISLDC…TKSGKSFPVT (486 aa)) lie on the Extracellular side of the membrane. 12 N-linked (GlcNAc...) asparagine glycosylation sites follow: Asn-143, Asn-230, Asn-256, Asn-289, Asn-338, Asn-363, Asn-400, Asn-416, Asn-432, Asn-445, Asn-464, and Asn-471. LRR repeat units lie at residues 411–434 (RITT…QNLT), 435–457 (TLEK…LSNM), and 459–481 (SLLV…LQRK). Residues 511–531 (IVASVGSAAILIVVLVLVLFL) form a helical membrane-spanning segment. The Cytoplasmic segment spans residues 532 to 887 (RKKKPSAVEV…FDAEMIPRAR (356 aa)). A Phosphothreonine modification is found at Thr-571. The Protein kinase domain occupies 580–853 (NNFGRVVGEG…HVVIELKECL (274 aa)). ATP-binding positions include 586-594 (VGEGGFGVV) and Lys-608. The residue at position 653 (Tyr-653) is a Phosphotyrosine. Asp-705 acts as the Proton acceptor in catalysis. The residue at position 739 (Ser-739) is a Phosphoserine. Phosphothreonine occurs at positions 740 and 745. Tyr-753 bears the Phosphotyrosine mark.

The protein belongs to the protein kinase superfamily. Ser/Thr protein kinase family.

It is found in the membrane. It carries out the reaction L-seryl-[protein] + ATP = O-phospho-L-seryl-[protein] + ADP + H(+). The catalysed reaction is L-threonyl-[protein] + ATP = O-phospho-L-threonyl-[protein] + ADP + H(+). The chain is Probable LRR receptor-like serine/threonine-protein kinase At5g59680 from Arabidopsis thaliana (Mouse-ear cress).